Reading from the N-terminus, the 354-residue chain is Probable L-ascorbate-6-phosphate lactonase UlaG (354 aa).

The protein belongs to the UlaG family. Requires a divalent metal cation as cofactor.

The protein localises to the cytoplasm. The enzyme catalyses L-ascorbate 6-phosphate + H2O = 3-dehydro-L-gulonate 6-phosphate. It functions in the pathway cofactor degradation; L-ascorbate degradation; D-xylulose 5-phosphate from L-ascorbate: step 1/4. In terms of biological role, probably catalyzes the hydrolysis of L-ascorbate-6-P into 3-keto-L-gulonate-6-P. Is essential for L-ascorbate utilization under anaerobic conditions. This Escherichia coli O139:H28 (strain E24377A / ETEC) protein is Probable L-ascorbate-6-phosphate lactonase UlaG.